The following is a 303-amino-acid chain: Polyisoprenyl-teichoic acid--peptidoglycan teichoic acid transferase TagU (303 aa).

Residues 1-6 (MSKGKK) lie on the Cytoplasmic side of the membrane. Residues 7-27 (IFAIIFGIILVLFLAVVGMGA) traverse the membrane as a helical; Signal-anchor for type II membrane protein segment. The Extracellular segment spans residues 28–303 (KLYWDVSKSM…QELKNQLNTK (276 aa)).

The protein belongs to the LytR/CpsA/Psr (LCP) family.

Its subcellular location is the cell membrane. Its pathway is cell wall biogenesis. Functionally, may catalyze the final step in cell wall teichoic acid biosynthesis, the transfer of the anionic cell wall polymers (APs) from their lipid-linked precursor to the cell wall peptidoglycan (PG). The sequence is that of Polyisoprenyl-teichoic acid--peptidoglycan teichoic acid transferase TagU from Enterococcus faecalis (strain ATCC 700802 / V583).